A 300-amino-acid polypeptide reads, in one-letter code: Energy-coupling factor transporter ATP-binding protein EcfA2 (300 aa).

Positions 3–258 (IKAKNIVKIY…NKFLIENKML (256 aa)) constitute an ABC transporter domain. 40–47 (GQTGSGKT) is a binding site for ATP.

It belongs to the ABC transporter superfamily. Energy-coupling factor EcfA family. Forms a stable energy-coupling factor (ECF) transporter complex composed of 2 membrane-embedded substrate-binding proteins (S component), 2 ATP-binding proteins (A component) and 2 transmembrane proteins (T component).

It localises to the cell membrane. Functionally, ATP-binding (A) component of a common energy-coupling factor (ECF) ABC-transporter complex. Unlike classic ABC transporters this ECF transporter provides the energy necessary to transport a number of different substrates. This Mesomycoplasma hyopneumoniae (strain 232) (Mycoplasma hyopneumoniae) protein is Energy-coupling factor transporter ATP-binding protein EcfA2.